Reading from the N-terminus, the 685-residue chain is E3 ubiquitin-protein ligase RNF103 (685 aa).

The next 4 helical transmembrane spans lie at 6–26 (FFLL…EAIV), 326–346 (LFVL…FITQ), 366–386 (LLII…LDSF), and 411–431 (MFYS…GLLI). Over residues 526–543 (EEMSEGSQDTENDSESEN) the composition is skewed to acidic residues. The disordered stretch occupies residues 526 to 550 (EEMSEGSQDTENDSESENTDTLSSE). An RING-type zinc finger spans residues 621-663 (CVVCLENFENGCLLMGLPCGHVFHQNCIVMWLAGGRHCCPVCR).

In terms of assembly, interacts with DERL1 and VCP. As to expression, highly expressed in the normal cerebellum but not in the cerebral cortex.

It localises to the endoplasmic reticulum membrane. It catalyses the reaction S-ubiquitinyl-[E2 ubiquitin-conjugating enzyme]-L-cysteine + [acceptor protein]-L-lysine = [E2 ubiquitin-conjugating enzyme]-L-cysteine + N(6)-ubiquitinyl-[acceptor protein]-L-lysine.. Its pathway is protein modification; protein ubiquitination. Functionally, acts as an E2-dependent E3 ubiquitin-protein ligase, probably involved in the ER-associated protein degradation pathway. This Homo sapiens (Human) protein is E3 ubiquitin-protein ligase RNF103 (RNF103).